Here is a 1820-residue protein sequence, read N- to C-terminus: uncharacterized protein (1820 aa).

9 disordered regions span residues 1 to 73 (MQWT…TLSG), 86 to 158 (TTTT…VRSA), 226 to 260 (GSSGPSSLVNSPALGRRKRYTSNSSNCSSQFNNNY), 286 to 366 (EERA…QETE), 453 to 497 (DVQD…RNLS), 519 to 548 (LSSISNKAPGGVPTESGVVTRPDSSDTDTA), 577 to 597 (GNSSTTTTTTSELGVPRPPTP), 619 to 689 (GAGT…TASG), and 735 to 830 (HSHN…TPSS). A compositionally biased stretch (polar residues) spans 20 to 31 (NRNSIEQRTPAN). Positions 86–128 (TTTTTIIESSSSTNTTLEKNSPSPAGGSCSSGSGSLSPAYLQH) are enriched in low complexity. Over residues 129–146 (HLQHHGSPLHHLQVHHHT) the composition is skewed to basic residues. Residues 247–259 (SNSSNCSSQFNNN) are compositionally biased toward low complexity. Residues 265–308 (VDSLDDMLRKLTELEQRVIEAEERAEEAEDKVRAMEQRLSEWPK) are a coiled coil. Residues 294–305 (DKVRAMEQRLSE) show a composition bias toward basic and acidic residues. Over residues 346-358 (ASGGATAGAAGSG) the composition is skewed to low complexity. Positions 362–438 (TQETEKTITS…LKNHIANQSQ (77 aa)) form a coiled coil. Residues 453-463 (DVQDFTGSGSN) are compositionally biased toward polar residues. Serine 542 and serine 543 each carry phosphoserine. Low complexity predominate over residues 623–632 (GTSTAESTAS). Gly residues predominate over residues 655 to 669 (HGSGTGIGTGDGHGT). A compositionally biased stretch (low complexity) spans 738 to 769 (NSSSTDNTETSTSGSASSPSKSLKTSSSLSPA). Positions 787–818 (QSRTSTTPSSRINQHLQPSQHQHHTLSNQNHG) are enriched in polar residues. PH domains lie at 909–1003 (SLEK…NVQR) and 1017–1124 (KPTV…VVSG). 3 positions are modified to phosphoserine: serine 1073, serine 1075, and serine 1077. The MyTH4 domain maps to 1159–1378 (HTKDTITAPL…PSRMEVLSIL (220 aa)). Positions 1389–1712 (HAIPVHMMNS…DYMNALGHTV (324 aa)) constitute an FERM domain. Disordered stretches follow at residues 1713 to 1748 (PGTPQMNSLTRNGSHRSLRTSQRPNLGGGSAVATGF) and 1764 to 1820 (ATHT…QRIK). The span at 1714–1724 (GTPQMNSLTRN) shows a compositional bias: polar residues. Low complexity predominate over residues 1764-1781 (ATHTLNSNHSHTLSSSHH). A compositionally biased stretch (basic and acidic residues) spans 1805–1820 (HQPDILKSTPDHQRIK).

This is an uncharacterized protein from Drosophila melanogaster (Fruit fly).